The chain runs to 144 residues: Bradykinin-potentiating and C-type natriuretic peptides isoform 2 (144 aa).

A signal peptide spans 1-23 (MVLSRLAASGLLLLALLALSVDG). The propeptide occupies 24 to 30 (KPVQQWA). A Pyrrolidone carboxylic acid modification is found at Q31. Positions 41-47 (LLVQQWA) are excised as a propeptide. Q48 carries the post-translational modification Pyrrolidone carboxylic acid. Positions 61 to 67 (LTVQQWA) are excised as a propeptide. Pyrrolidone carboxylic acid is present on Q68. Residues 78 to 84 (LTVQQWA) constitute a propeptide that is removed on maturation. The interval 81-110 (QQWAQGRPPGPPIPPLTVQQWAQARPPHPP) is disordered. Position 85 is a pyrrolidone carboxylic acid (Q85). Positions 96-102 (LTVQQWA) are excised as a propeptide. A Pyrrolidone carboxylic acid modification is found at Q103. Positions 114-116 (APL) are excised as a propeptide. Pyrrolidone carboxylic acid is present on Q117. A propeptide is located at residue V122. Q123 is subject to Pyrrolidone carboxylic acid. Positions 128–144 (VQKWAPVQKWAPLLQPT) are excised as a propeptide.

The protein in the N-terminal section; belongs to the bradykinin-potentiating peptide family. In terms of tissue distribution, expressed by venom gland.

The protein localises to the secreted. It is found in the cytoplasm. The protein resides in the cytosol. Its function is as follows. Peptide with several activities. It inhibits the activity of the angiotensin-converting enzyme (ACE) by a preferential interaction with its C-domain. It evokes transient hypotension (-14 mmHg) similar to that evoked by 0.5 ug of bradykinin, when injected alone into rats. It has a high bradykinin-potentiating effect (120%), when 60 nmol of BPP-10c are coinjected with 0.5 ug of bradykinin into rats. Does not affect angiotensin-1 pressor effects. Shows potent and long-lasting antihypertensive activity as well as a reduction of the heart rate. It also binds and dose-dependently promotes the activation of cytosolic argininosuccinate synthase (ASS1), an enzyme that catalyzes the conversion of citrulline, L-aspartate and ATP to argininosuccinate, AMP and pyrophosphate. It also enhances ASS1-dependent arginine production in HEK 293 cells, as well as in spontaneous hypertensive rat (SHR) and Wistar rat plasma. In addition, it induces the production of nitric-oxide (NO) by HUVEC cells via the endothelial nitric-oxide synthase (NOS3), which use arginine as a substrate and produce NO. It has been shown to be internalized by ASS1-expressing endothelial (HUVEC) and kidney (HEK 293) cells, and is detected homogenously distributed within the cell cytoplasm for up to 2 hours. In terms of biological role, acts as indirect hypotensive agent. Increases leukocyte rolling flux and adhesion by five-fold in post-capillary venules, without any increments in vasodilation of arterioles. Acts as indirect hypotensive agent. Potently induces vasodilation of arterioles, with only a small increase in leukocyte rolling flux. In Bothrops jararacussu (Jararacussu), this protein is Bradykinin-potentiating and C-type natriuretic peptides isoform 2.